The sequence spans 260 residues: tRNA pseudouridine synthase B (260 aa).

His-44 contacts substrate. Catalysis depends on Asp-49, which acts as the Nucleophile. Residues Tyr-77, Tyr-180, and Leu-201 each coordinate substrate.

Belongs to the pseudouridine synthase TruB family. Type 1 subfamily.

The catalysed reaction is uridine(55) in tRNA = pseudouridine(55) in tRNA. Responsible for synthesis of pseudouridine from uracil-55 in the psi GC loop of transfer RNAs. This is tRNA pseudouridine synthase B from Blochmanniella pennsylvanica (strain BPEN).